A 420-amino-acid polypeptide reads, in one-letter code: Mannose-1-phosphate guanylyltransferase regulatory subunit alpha (420 aa).

The substrate-binding domain stretch occupies residues 2 to 251 (LKAVILIGGP…DGIWSQIKSA (250 aa)). Residues glutamate 85 and glutamine 247 each coordinate GDP-alpha-D-mannose. The hexapeptide repeat domain stretch occupies residues 273-420 (LARHTAGGPR…SRSFTNQIIL (148 aa)). The interval 356–384 (TPNDPNPNDPRARMDSESLFKDGKLLPAI) is C-loop.

The protein belongs to the transferase hexapeptide repeat family. As to quaternary structure, component of the GMPPA-GMPPB mannose-1-phosphate guanylyltransferase complex composed of 4 GMPPA subunits and 8 GMPPB subunits; the complex is organized into three layers, a central layer made up of 2 GMPPA dimers sandwiched between two layers each made up of 2 GMPPB dimers.

Its subcellular location is the cytoplasm. Its function is as follows. Regulatory subunit of the GMPPA-GMPPB mannose-1-phosphate guanylyltransferase complex; reduces the catalytic activity of GMPPB when part of the complex. Mediates allosteric feedback inhibition of GMPPB catalytic activity upon binding GDP-alpha-D-mannose. Together with GMPPB regulates GDP-alpha-D-mannose levels. In Rattus norvegicus (Rat), this protein is Mannose-1-phosphate guanylyltransferase regulatory subunit alpha (Gmppa).